The chain runs to 157 residues: Ribosome maturation factor RimP (157 aa).

This sequence belongs to the RimP family.

It localises to the cytoplasm. Its function is as follows. Required for maturation of 30S ribosomal subunits. The sequence is that of Ribosome maturation factor RimP from Streptococcus thermophilus (strain ATCC BAA-491 / LMD-9).